Consider the following 111-residue polypeptide: Dynein light chain Tctex-type (111 aa).

This sequence belongs to the dynein light chain Tctex-type family.

The protein resides in the cytoplasm. The protein localises to the cytoskeleton. Functionally, acts as a non-catalytic accessory component of a dynein complex. The polypeptide is Dynein light chain Tctex-type (dlc1) (Schizosaccharomyces pombe (strain 972 / ATCC 24843) (Fission yeast)).